Consider the following 587-residue polypeptide: Protoheme IX farnesyltransferase (587 aa).

Residues 1–317 (MAARSLMRIL…ISLTKPKVIS (317 aa)) are unknown. The next 16 membrane-spanning stretches (helical) occupy residues 9 to 29 (ILLV…LVTI), 58 to 78 (LLHR…LVAV), 93 to 113 (GIAA…VWGV), 123 to 143 (LSGA…IAVP), 172 to 192 (AAGV…FGMM), 195 to 215 (VPTN…WMAL), 238 to 258 (SLFL…PVAG), 260 to 280 (LISL…AVIL), 315 to 335 (VISL…AGLP), 337 to 357 (WWLV…AGAI), 386 to 406 (AAFI…WVFT), 409 to 429 (LAAF…TGWL), 437 to 457 (IIIG…AVTG), 464 to 484 (VVLF…LALV), 522 to 542 (LLPV…VVLG), and 560 to 580 (AIWG…AAMV). Positions 318 to 587 (LLLVTTLTTM…AMVADRLIIG (270 aa)) are protoheme IX prenyltransferase.

This sequence in the C-terminal section; belongs to the UbiA prenyltransferase family. Protoheme IX farnesyltransferase subfamily.

Its subcellular location is the cell membrane. The catalysed reaction is heme b + (2E,6E)-farnesyl diphosphate + H2O = Fe(II)-heme o + diphosphate. It functions in the pathway porphyrin-containing compound metabolism; heme O biosynthesis; heme O from protoheme: step 1/1. Functionally, converts heme B (protoheme IX) to heme O by substitution of the vinyl group on carbon 2 of heme B porphyrin ring with a hydroxyethyl farnesyl side group. In Chloroflexus aurantiacus (strain ATCC 29366 / DSM 635 / J-10-fl), this protein is Protoheme IX farnesyltransferase (ctaB).